A 504-amino-acid polypeptide reads, in one-letter code: 26S proteasome non-ATPase regulatory subunit 5 (504 aa).

At Ala-2 the chain carries N-acetylalanine.

Belongs to the proteasome subunit S5B/HSM3 family. In terms of assembly, interacts with PSMC1, PSMC2, PSMD1 and PSMD6. Part of transient complex containing PSMD5, PSMC2, PSMC1 and PSMD2 formed during the assembly of the 26S proteasome.

In terms of biological role, acts as a chaperone during the assembly of the 26S proteasome, specifically of the base subcomplex of the PA700/19S regulatory complex (RC). In the initial step of the base subcomplex assembly is part of an intermediate PSMD5:PSMC2:PSMC1:PSMD2 module which probably assembles with a PSMD10:PSMC4:PSMC5:PAAF1 module followed by dissociation of PSMD5. This is 26S proteasome non-ATPase regulatory subunit 5 (Psmd5) from Mus musculus (Mouse).